Consider the following 1827-residue polypeptide: Phenolphthiocerol/phthiocerol polyketide synthase subunit C (1827 aa).

In terms of domain architecture, Ketosynthase family 3 (KS3) spans 35-461 (CEPVAVVGIG…GTNAHVVVEQ (427 aa)). Residues cysteine 207, histidine 342, and histidine 383 each act as for beta-ketoacyl synthase activity in the active site. The segment at 566–876 (VFVYSGQGSQ…LAAVGVAASE (311 aa)) is acyltransferase. Serine 654 acts as the For malonyltransferase activity in catalysis. An N-terminal hotdog fold region spans residues 910–1037 (HPLLGAHIEM…AKVEQSPREC (128 aa)). The segment at 910–1076 (HPLLGAHIEM…QHHGPAFAAL (167 aa)) is dehydratase. The 289-residue stretch at 910-1198 (HPLLGAHIEM…LRRVERRAVP (289 aa)) folds into the PKS/mFAS DH domain. Histidine 942 (proton acceptor; for dehydratase activity) is an active-site residue. Residues 1050–1198 (GTTVSPADFY…LRRVERRAVP (149 aa)) are C-terminal hotdog fold. The active-site Proton donor; for dehydratase activity is aspartate 1111. Residues 1439 to 1617 (ASYVVTGGLG…VINWGPWSEV (179 aa)) form a beta-ketoacyl reductase region. Position 1440–1485 (1440–1485 (SYVVTGGLGGLGLVVARWLVDRGAGRVVLGGRSDPTDEQCNVLAEL)) interacts with NADP(+). One can recognise a Carrier domain in the interval 1706 to 1785 (RAVTERMCAR…DLTADLMRQL (80 aa)). An O-(pantetheine 4'-phosphoryl)serine modification is found at serine 1745. Positions 1807–1820 (RAAARHGAAMRRRP) are enriched in basic residues. The disordered stretch occupies residues 1807–1827 (RAAARHGAAMRRRPKPEVQGG).

NADP(+) is required as a cofactor. Requires pantetheine 4'-phosphate as cofactor.

It carries out the reaction icosanoyl-[(phenol)carboxyphthiodiolenone synthase] + 2 (S)-methylmalonyl-CoA + 3 malonyl-CoA + 5 NADPH + 10 H(+) = C32-carboxyphthiodiolenone-[(phenol)carboxyphthiodiolenone synthase] + 5 CO2 + 5 NADP(+) + 5 CoA + 2 H2O. The catalysed reaction is docosanoyl-[(phenol)carboxyphthiodiolenone synthase] + 2 (S)-methylmalonyl-CoA + 3 malonyl-CoA + 5 NADPH + 10 H(+) = C34-carboxyphthiodiolenone-[(phenol)carboxyphthiodiolenone synthase] + 5 CO2 + 5 NADP(+) + 5 CoA + 2 H2O. The enzyme catalyses 17-(4-hydroxyphenyl)heptadecanoyl-[(phenol)carboxyphthiodiolenone synthase] + 2 (S)-methylmalonyl-CoA + 3 malonyl-CoA + 5 NADPH + 10 H(+) = C35-(phenol)carboxyphthiodiolenone-[(phenol)carboxyphthiodiolenone synthase] + 5 CO2 + 5 NADP(+) + 5 CoA + 2 H2O. It catalyses the reaction 19-(4-hydroxyphenyl)nonadecanoyl-[(phenol)carboxyphthiodiolenone synthase] + 2 (S)-methylmalonyl-CoA + 3 malonyl-CoA + 5 NADPH + 10 H(+) = C37-(phenol)carboxyphthiodiolenone-[(phenol)carboxyphthiodiolenone synthase] + 5 CO2 + 5 NADP(+) + 5 CoA + 2 H2O. It participates in lipid metabolism; fatty acid biosynthesis. In terms of biological role, part of the PpsABCDE complex involved in the biosynthesis of the lipid core common to phthiocerols and phenolphthiocerols by successive additions of malonyl-CoA or methylmalonyl-CoA extender units. PpsA can accept as substrate the activated forms of either icosanoyl (C20), docosanoyl (C22) or lignoceroyl (C24) groups from FadD26, or a (4-hydroxyphenyl)-C17 or (4-hydroxyphenyl)-C19 fatty acyl from FadD29. PpsA initiates the biosynthesis and extends its substrate using a malonyl-CoA extender unit. The PpsB and PpsC proteins add the second and third malonyl-CoA extender units. PpsD adds an (R)-methylmalonyl unit and PpsE adds a second (R)-methylmalonyl unit. The incorporation of the methylmalonyl units results in formation of two branched methyl groups in the elongated product. This Mycobacterium tuberculosis (strain CDC 1551 / Oshkosh) protein is Phenolphthiocerol/phthiocerol polyketide synthase subunit C (ppsD).